Reading from the N-terminus, the 184-residue chain is UPF0316 protein BPUM_0594 (184 aa).

The next 3 membrane-spanning stretches (helical) occupy residues 9–29 (AFTM…FSTM), 41–61 (AAAF…SIVL), and 67–87 (IQNV…GMKI).

It belongs to the UPF0316 family.

It localises to the cell membrane. The polypeptide is UPF0316 protein BPUM_0594 (Bacillus pumilus (strain SAFR-032)).